The chain runs to 85 residues: Small ribosomal subunit protein uS17 (85 aa).

The protein belongs to the universal ribosomal protein uS17 family. As to quaternary structure, part of the 30S ribosomal subunit.

One of the primary rRNA binding proteins, it binds specifically to the 5'-end of 16S ribosomal RNA. The polypeptide is Small ribosomal subunit protein uS17 (Geobacter metallireducens (strain ATCC 53774 / DSM 7210 / GS-15)).